A 311-amino-acid polypeptide reads, in one-letter code: Lipid A biosynthesis acyltransferase (311 aa).

Residues 19 to 39 (WLFWLGVAIWRSILCLPYPIL) form a helical membrane-spanning segment. The HXXXXD motif motif lies at 134 to 139 (HFLTLE).

This sequence belongs to the LpxL/LpxM/LpxP family.

The protein resides in the cell inner membrane. The enzyme catalyses an alpha-Kdo-(2-&gt;4)-alpha-Kdo-(2-&gt;6)-lipid IVA + a fatty acyl-[ACP] = an alpha-Kdo-(2-&gt;4)-alpha-Kdo-(2-&gt;6)-(acyl)-lipid IVA + holo-[ACP]. Its pathway is glycolipid biosynthesis; KDO(2)-lipid A biosynthesis; KDO(2)-lipid A from CMP-3-deoxy-D-manno-octulosonate and lipid IV(A): step 3/4. The protein operates within bacterial outer membrane biogenesis; lipopolysaccharide biosynthesis. Its function is as follows. Catalyzes the transfer of an acyl chain from an acyl-[acyl-carrier-protein] (ACP) to a Kdo(2)-lipid IV(A) to form a Kdo(2)-(acyl)-lipid IV(A). This chain is Lipid A biosynthesis acyltransferase, found in Haemophilus influenzae (strain ATCC 51907 / DSM 11121 / KW20 / Rd).